A 469-amino-acid chain; its full sequence is Trigger factor (469 aa).

A PPIase FKBP-type domain is found at 162 to 243 (GDFVSIDLSA…VKSVKERELP (82 aa)). The tract at residues 438–469 (GPSGEQAAEDSAEESTDAAEGEAAEDADDTDK) is disordered. The segment covering 444 to 469 (AAEDSAEESTDAAEGEAAEDADDTDK) has biased composition (acidic residues).

It belongs to the FKBP-type PPIase family. Tig subfamily.

It is found in the cytoplasm. The catalysed reaction is [protein]-peptidylproline (omega=180) = [protein]-peptidylproline (omega=0). In terms of biological role, involved in protein export. Acts as a chaperone by maintaining the newly synthesized protein in an open conformation. Functions as a peptidyl-prolyl cis-trans isomerase. This is Trigger factor from Mycolicibacterium smegmatis (strain ATCC 700084 / mc(2)155) (Mycobacterium smegmatis).